The chain runs to 257 residues: tRNA (guanine-N(1)-)-methyltransferase (257 aa).

Residues G117 and 137 to 142 (LGDFVL) contribute to the S-adenosyl-L-methionine site.

The protein belongs to the RNA methyltransferase TrmD family. Homodimer.

Its subcellular location is the cytoplasm. The catalysed reaction is guanosine(37) in tRNA + S-adenosyl-L-methionine = N(1)-methylguanosine(37) in tRNA + S-adenosyl-L-homocysteine + H(+). Specifically methylates guanosine-37 in various tRNAs. The protein is tRNA (guanine-N(1)-)-methyltransferase of Bordetella parapertussis (strain 12822 / ATCC BAA-587 / NCTC 13253).